A 487-amino-acid chain; its full sequence is Arginine ADP-riboxanase CopC (487 aa).

Polar residues predominate over residues 1 to 12; sequence MRVENHSPSLSK. The interval 1-27 is disordered; that stretch reads MRVENHSPSLSKLNPPEAGSGDPTAIG. 8 residues coordinate NAD(+): H137, Q138, S139, L143, A150, A152, N154, and L157. H137 contributes to the nicotinamide binding site. ADP-D-ribose contacts are provided by S139 and L143. Positions 152, 154, 157, 166, 167, 168, and 183 each coordinate ADP-D-ribose. N167 provides a ligand contact to NAD(+). NAD(+) is bound at residue F183. Nicotinamide-binding residues include F183, F184, H202, and F207. Residue H202 participates in NAD(+) binding. ADP-D-ribose-binding residues include F207 and D230. 2 residues coordinate NAD(+): D230 and E325. E325 provides a ligand contact to nicotinamide. Residue E325 is part of the active site. 2 ANK repeats span residues 368 to 398 and 444 to 476; these read DAVT…EAGD and SGET…LLSE.

The protein belongs to the OspC family. In terms of assembly, interacts with host calmodulin (CALM1, CALM2 and/or CALM3); specifically interacts with the apo form of calmodulin and calmodulin-binding is required to mediate arginine ADP-riboxanation of host caspases.

The protein resides in the secreted. The protein localises to the host cytoplasm. It catalyses the reaction L-arginyl-[protein] + NAD(+) = ADP-riboxanated L-argininyl-[protein] + nicotinamide + NH4(+) + H(+). Its activity is regulated as follows. Interaction with host calmodulin (CALM1, CALM2 and/or CALM3) is required to mediate arginine ADP-riboxanation of host caspases. Functionally, ADP-riboxanase effector that inhibits host cell programmed cell death. Acts by mediating arginine ADP-riboxanation of host caspases (CASP3, CASP7, CASP8 and CASP9), blocking their processing and activation. ADP-riboxanation of host apoptotic caspases (CASP3, CASP7, CASP8 and CASP9) prevents their activation, thereby inhibiting host cell apoptosis. ADP-riboxanation of host CASP8 also inhibits host cell necroptosis. ADP-riboxanation of host CASP3 also abolishes pyroptosis by preventing its ability to cleave GSDME. May also able to inactivate CASP4/CASP11, blocking inhibiting LPS-induced pyroptosis; however this activity is unsure in vivo. ADP-riboxanation takes place in several steps: CopC first binds host caspases and NAD(+); NAD(+) is hydrolyzed to nicotinamide and ADP-D-ribose. CopC then transfers the ADP-D-ribose to the modified arginine of caspases and forms the ADP-D-ribose-deacylization on arginine, leading to deamination to remove one N-omega group on target arginine. This is Arginine ADP-riboxanase CopC from Chromobacterium violaceum (strain ATCC 12472 / DSM 30191 / JCM 1249 / CCUG 213 / NBRC 12614 / NCIMB 9131 / NCTC 9757 / MK).